Consider the following 229-residue polypeptide: Dephospho-CoA kinase domain-containing protein (229 aa).

Positions 3–207 constitute a DPCK domain; it reads LVGLTGGIAS…DCMQFLIIRA (205 aa). 8–15 is a binding site for ATP; sequence GGIASGKS.

It belongs to the CoaE family.

This Danio rerio (Zebrafish) protein is Dephospho-CoA kinase domain-containing protein (dcakd).